The chain runs to 201 residues: Histone-like protein HC2 (201 aa).

Residues 1-69 are disordered; the sequence is MLGVQKKCST…VAKKATAKKA (69 aa). 2 stretches are compositionally biased toward basic residues: residues 8 to 50 and 59 to 69; these read CSTR…KTVA and PVAKKATAKKA.

It belongs to the histone H1/H5 family. HCT subfamily.

Might have a role in establishing the nucleoid structure of elementary bodies. The polypeptide is Histone-like protein HC2 (hctB) (Chlamydia trachomatis serovar D (strain ATCC VR-885 / DSM 19411 / UW-3/Cx)).